A 937-amino-acid polypeptide reads, in one-letter code: Protein translocase subunit SecA (937 aa).

ATP contacts are provided by residues glutamine 90, 108–112, and aspartate 509; that span reads GEGKT.

Belongs to the SecA family. Monomer and homodimer. Part of the essential Sec protein translocation apparatus which comprises SecA, SecYEG and auxiliary proteins SecDF. Other proteins may also be involved.

It localises to the cell inner membrane. It is found in the cellular thylakoid membrane. The protein resides in the cytoplasm. It catalyses the reaction ATP + H2O + cellular proteinSide 1 = ADP + phosphate + cellular proteinSide 2.. Part of the Sec protein translocase complex. Interacts with the SecYEG preprotein conducting channel. Has a central role in coupling the hydrolysis of ATP to the transfer of proteins into and across the cell membrane, serving as an ATP-driven molecular motor driving the stepwise translocation of polypeptide chains across the membrane. Its function is as follows. Probably participates in protein translocation into and across both the cytoplasmic and thylakoid membranes in cyanobacterial cells. The protein is Protein translocase subunit SecA of Parasynechococcus marenigrum (strain WH8102).